The primary structure comprises 514 residues: Cytochrome P450 monooxygenase nodJ (514 aa).

Residues 2–24 (ELIVIIITLAFCILLYGTRWRAA) traverse the membrane as a helical segment. N-linked (GlcNAc...) asparagine glycosylation is found at N144, N245, and N416. C432 contributes to the heme binding site.

Belongs to the cytochrome P450 family. Heme is required as a cofactor.

Its subcellular location is the membrane. It functions in the pathway secondary metabolite biosynthesis. Functionally, cytochrome P450 monooxygenase; part of the gene cluster that mediates the biosynthesis of the indole diterpenes nodulisporic acids (NA). Nodulisporic acid A (NAA) and its chemically modified derivatives are of particular significance because of their highly potent insecticidal activity against blood-feeding arthropods and lack of observable adverse effects on mammals, in particular the tremogenicity associated with the paspaline-derived IDTs is not observed. The geranylgeranyl diphosphate (GGPP) synthase ggs1, localized outside of the cluster, is proposed to catalyze the first step in nodulisporic acid biosynthesis via conversion of farnesyl pyrophosphate and isopentyl pyrophosphate into geranylgeranyl pyrophosphate (GGPP). Condensation of indole-3-glycerol phosphate with GGPP by the prenyl transferase nodC then forms 3-geranylgeranylindole (3-GGI). Epoxidation by the FAD-dependent monooxygenase nodM leads to a single-epoxidized-GGI that is substrate of the terpene cyclase nodB for cyclization to yield emindole SB. The terminal methyl carbon, C28, of emindole SB is then oxidized by the cytochrome P450 monooxygenase nodW to produce nodulisporic acid F (NAF), the pentacyclic core of NAA. NAF is converted to nodulisporic acid E (NAE) via prenylation. This step is probably performed by one of the indole diterpene prenyltransferases nodD1 or nodD2. Several oxidation steps performed by the FAD-linked oxidoreductase nodO and one of the cytochrome P450 monooxygenase nodR, nodX or nodZ further convert NAE to nodulisporic acid D (NAD). NAD is substrate of cytochrome P450 monooxygenase nodJ to produce the precursor of nodulisporic acid C (NAC), converted to NAC by one of the indole diterpene prenyltransferases nodD1 or nodD2. The FAD-dependent monooxygenase nodY2 then oxidizes NAC to nodulisporic acid B (NAB). Finally NAB is converted to NAA by one of the cytochrome P450 monooxygenases nodR, nodX or nodZ. This chain is Cytochrome P450 monooxygenase nodJ, found in Hypoxylon pulicicidum.